The following is an 80-amino-acid chain: Small ribosomal subunit protein bS21 (80 aa).

This sequence belongs to the bacterial ribosomal protein bS21 family.

The chain is Small ribosomal subunit protein bS21 from Rhodospirillum rubrum (strain ATCC 11170 / ATH 1.1.1 / DSM 467 / LMG 4362 / NCIMB 8255 / S1).